We begin with the raw amino-acid sequence, 264 residues long: Zinc finger protein CG30 (264 aa).

The RING-type zinc-finger motif lies at 8–63 (CNICFSVAEIKNYFLQPIDRLTIIPVLELDTCKHQLCSMCIRKIRKRKKVPCPLCR).

It is found in the host nucleus. In terms of biological role, plays a role in the proper expression of late and very late genes. In Autographa californica nuclear polyhedrosis virus (AcMNPV), this protein is Zinc finger protein CG30 (CG30).